The sequence spans 120 residues: Large ribosomal subunit protein uL18 (120 aa).

Belongs to the universal ribosomal protein uL18 family. Part of the 50S ribosomal subunit; part of the 5S rRNA/L5/L18/L25 subcomplex. Contacts the 5S and 23S rRNAs.

This is one of the proteins that bind and probably mediate the attachment of the 5S RNA into the large ribosomal subunit, where it forms part of the central protuberance. This is Large ribosomal subunit protein uL18 from Methylocella silvestris (strain DSM 15510 / CIP 108128 / LMG 27833 / NCIMB 13906 / BL2).